A 92-amino-acid polypeptide reads, in one-letter code: Acylphosphatase (92 aa).

Cysteine 5 and cysteine 49 form a disulfide bridge. Residues 5 to 92 (CIIAWVYGRV…SGELTDFRIR (88 aa)) form the Acylphosphatase-like domain. Active-site residues include arginine 20 and asparagine 38.

This sequence belongs to the acylphosphatase family.

It carries out the reaction an acyl phosphate + H2O = a carboxylate + phosphate + H(+). The sequence is that of Acylphosphatase from Escherichia coli O157:H7.